Consider the following 271-residue polypeptide: Phosphatidylglycerol--prolipoprotein diacylglyceryl transferase (271 aa).

7 helical membrane-spanning segments follow: residues 21–41 (ISVR…MWLA), 60–80 (LLFA…VLFY), 95–115 (VWTG…AMLW), 124–144 (FFGV…VGRL), 176–196 (SQLY…NWFI), 203–223 (GSVS…VEYV), and 230–250 (LGLF…MIIG). Arg-143 lines the a 1,2-diacyl-sn-glycero-3-phospho-(1'-sn-glycerol) pocket.

The protein belongs to the Lgt family.

It localises to the cell inner membrane. The enzyme catalyses L-cysteinyl-[prolipoprotein] + a 1,2-diacyl-sn-glycero-3-phospho-(1'-sn-glycerol) = an S-1,2-diacyl-sn-glyceryl-L-cysteinyl-[prolipoprotein] + sn-glycerol 1-phosphate + H(+). Its pathway is protein modification; lipoprotein biosynthesis (diacylglyceryl transfer). Functionally, catalyzes the transfer of the diacylglyceryl group from phosphatidylglycerol to the sulfhydryl group of the N-terminal cysteine of a prolipoprotein, the first step in the formation of mature lipoproteins. This is Phosphatidylglycerol--prolipoprotein diacylglyceryl transferase from Vibrio vulnificus (strain CMCP6).